The chain runs to 490 residues: Transcriptional activator/repressor MOT3 (490 aa).

At Met1 the chain carries N-acetylmethionine. 3 disordered regions span residues 1-69, 101-162, and 214-267; these read MNAD…NKDD, NNNN…HPNQ, and NNGN…PQHH. The span at 8-36 shows a compositional bias: low complexity; the sequence is QQQQQQRQQHQQQQHQQQQHQHQHQQQQH. The segment covering 37–65 has biased composition (polar residues); that stretch reads TILQNVSNTNNIGSDSLASQPFNTTTVSS. The interval 98-295 is prion domain (PrD); that stretch reads NNSNNNNVTA…NLNLNINPAQ (198 aa). 4 stretches are compositionally biased toward low complexity: residues 119–128, 138–157, 214–232, and 248–264; these read NNSNNSNNSN, NNST…NNNN, NNGN…HSAP, and THNN…NNAP. 2 consecutive C2H2-type zinc fingers follow at residues 346–368 and 374–397; these read HQCQ…LLSH and FLCP…KLKH. Positions 421-436 are enriched in low complexity; it reads NNNNDNNNNNNSNSAS. The segment at 421–458 is disordered; sequence NNNNDNNNNNNSNSASGSGGAGAAAAAATAPENEDGNG.

The protein resides in the nucleus. Its function is as follows. Transcription factor that affects the expression of a large set of genes. Recognizes and binds to the consensus sequence 5'-[CAT]AGG[TC]A-3' in the promoter region. Plays a major role in the repression of a specific subset of hypoxic genes (e.g. ANB1, DAN1 and HEM13) under aerobic conditions. Acts synergistically with the transcription factor ROX1 to recruit the general repression complex SSN6-TUP1 to the promoter of hypoxic genes. Represses transcription of ergosterol biosynthetic genes. Negatively regulates pheromone-induced gene expression. Can act as a transcriptional activator (e.g. of genes like CYC1, SUC2 and the Ty long terminal repeat delta promoter). The protein is Transcriptional activator/repressor MOT3 (MOT3) of Saccharomyces cerevisiae (strain ATCC 204508 / S288c) (Baker's yeast).